The primary structure comprises 185 residues: CASP-like protein 5A1 (185 aa).

Topologically, residues 1–45 (MNVSHPAVHPVGVPPALGGHAVPPRMRMRVRMEYLVFQGMPLPGT) are cytoplasmic. Residues 46-66 (LGGLVLRLGQFCSALIAFSVM) traverse the membrane as a helical segment. At 67-76 (LSVRDFSVTA) the chain is on the extracellular side. A helical transmembrane segment spans residues 77 to 97 (FCYLVAATVLQCLWSLAMAVI). Over 98–121 (DVYALLVKRSLRNPLLVSIFVVGD) the chain is Cytoplasmic. The helical transmembrane segment at 122 to 142 (GVTATLTFAAACASAGVIVLI) threads the bilayer. Over 143–160 (GNDIAMCKDNPCANYEAA) the chain is Extracellular. Residues 161-181 (IIMAFLSWFMVSISFILTFWL) form a helical membrane-spanning segment. The Cytoplasmic portion of the chain corresponds to 182–185 (LATL).

This sequence belongs to the Casparian strip membrane proteins (CASP) family. Homodimer and heterodimers.

It is found in the cell membrane. This Picea sitchensis (Sitka spruce) protein is CASP-like protein 5A1.